A 313-amino-acid polypeptide reads, in one-letter code: Sorting nexin-20 (313 aa).

The tract at residues 1-61 is disordered; sequence MASPQHPGGP…MTTRELQEHW (61 aa). Serine 3 is subject to Phosphoserine. The span at 29–38 shows a compositional bias: pro residues; sequence PPGPDLPCPG. Residues 45 to 55 are compositionally biased toward polar residues; the sequence is GPTSNSNMTTR. The PX domain maps to 71–188; that stretch reads VRLLFEIASA…DFLTRPELCE (118 aa). A 1,2-diacyl-sn-glycero-3-phospho-(1D-myo-inositol-3-phosphate) contacts are provided by arginine 113, serine 115, lysine 140, and arginine 154.

This sequence belongs to the sorting nexin family. In terms of assembly, interacts with SELPLG. Interaction with SELPLG is controversial.

It localises to the early endosome membrane. The protein localises to the cell membrane. It is found in the cytoplasm. The protein resides in the nucleus. May play a role in cellular vesicle trafficking. Has been proposed to function as a sorting protein that targets SELPLG into endosomes, but has no effect on SELPLG internalization from the cell surface, or on SELPLG-mediated cell-cell adhesion. This is Sorting nexin-20 (Snx20) from Rattus norvegicus (Rat).